The following is a 347-amino-acid chain: Probable replication factor C subunit 5 (347 aa).

Residue 64 to 71 participates in ATP binding; that stretch reads GPPGTGKT.

Belongs to the activator 1 small subunits family. Heteropentamer of various rfc subunits that forms a complex (RFC) with PCNA in the presence of ATP.

The protein resides in the nucleus. Functionally, the elongation of primed DNA templates by DNA polymerase delta and epsilon requires the action of the accessory proteins PCNA and activator 1. The chain is Probable replication factor C subunit 5 (rfc5) from Dictyostelium discoideum (Social amoeba).